Consider the following 559-residue polypeptide: Probable D-2-hydroxyglutarate dehydrogenase, mitochondrial (559 aa).

The transit peptide at 1-80 (MARRAAAGLL…MNFEVQKRSF (80 aa)) directs the protein to the mitochondrion. Residues 131–310 (YKGSSQLLLL…TKIAILTPAK (180 aa)) enclose the FAD-binding PCMH-type domain.

This sequence belongs to the FAD-binding oxidoreductase/transferase type 4 family. In terms of assembly, homodimer. Requires FAD as cofactor.

The protein localises to the mitochondrion. It carries out the reaction (R)-2-hydroxyglutarate + A = 2-oxoglutarate + AH2. Catalyzes the oxidation of D-2-hydroxyglutarate to alpha-ketoglutarate. This Oryza sativa subsp. japonica (Rice) protein is Probable D-2-hydroxyglutarate dehydrogenase, mitochondrial (D2HGDH).